The primary structure comprises 580 residues: Bifunctional lycopene cyclase/phytoene synthase (580 aa).

The next 3 helical transmembrane spans lie at 3–23, 35–55, and 65–85; these read WEYA…LAAV, KLVF…SYLI, and GVVV…FFVI. N-linked (GlcNAc...) asparagine glycosylation is present at N89. A run of 4 helical transmembrane segments spans residues 116–136, 139–159, 171–191, and 214–234; these read IAGQ…VSSG, GMYM…LWSI, NTAL…TFAL, and IEEA…LIAC.

In the N-terminal section; belongs to the lycopene beta-cyclase family. It in the C-terminal section; belongs to the phytoene/squalene synthase family.

It localises to the membrane. It catalyses the reaction all-trans-lycopene = gamma-carotene. The catalysed reaction is gamma-carotene = all-trans-beta-carotene. It carries out the reaction 2 (2E,6E,10E)-geranylgeranyl diphosphate = 15-cis-phytoene + 2 diphosphate. It participates in carotenoid biosynthesis; beta-carotene biosynthesis. Its pathway is carotenoid biosynthesis; phytoene biosynthesis; all-trans-phytoene from geranylgeranyl diphosphate: step 1/1. Its function is as follows. Bifunctional enzyme; part of the car gene cluster that mediates the biosynthesis of neurosporaxanthin, a carboxylic apocarotenoid acting as an essential protective pigments and leading to orange pigmentation. CarAR catalyzes the first step of the pathway by converting geranylgeranyl diphosphate to phytoene, as well as the later cyclization step that transforms the carB product lycopene into gamma-carotene. CarAR also converts part of gamma-carotene into beta-carotene. Neurosporaxanthin is synthesized from geranyl-geranyl pyrophosphate (GGPP) through several enzymatic activities. Phytoene synthase activity performed by the bifunctional enzyme carAR first produces phytoene from geranyl-geranyl pyrophosphate (GGPP). The phytoene dehydrogenase carB then introduces 4 desaturations to lead to lycopene which is substrate of the carotene cyclase activity of carAR that leads to the production of gamma-carotene. CarB then performs a 5th desaturation reaction to yield torulene. Torulene is the substrate of the dioxidase carT that breaks the molecule, removing five carbon atoms to yield beta-apo-4'-carotenal, whereas the aldehyde dehydrogenase carD mediates the last step by converting beta-apo-4'-carotenal into neurosporaxanthin. This chain is Bifunctional lycopene cyclase/phytoene synthase, found in Gibberella fujikuroi (strain CBS 195.34 / IMI 58289 / NRRL A-6831) (Bakanae and foot rot disease fungus).